The chain runs to 443 residues: Trigger factor (443 aa).

In terms of domain architecture, PPIase FKBP-type spans 165 to 250 (GDQVVMDFVG…IKEVKEPVAA (86 aa)).

It belongs to the FKBP-type PPIase family. Tig subfamily.

The protein resides in the cytoplasm. It catalyses the reaction [protein]-peptidylproline (omega=180) = [protein]-peptidylproline (omega=0). In terms of biological role, involved in protein export. Acts as a chaperone by maintaining the newly synthesized protein in an open conformation. Functions as a peptidyl-prolyl cis-trans isomerase. This chain is Trigger factor, found in Ruegeria pomeroyi (strain ATCC 700808 / DSM 15171 / DSS-3) (Silicibacter pomeroyi).